The chain runs to 31 residues: MPRRRRASRRIRRRRRPRVSRRRRRGGRRRR.

Residues 1–31 are disordered; it reads MPRRRRASRRIRRRRRPRVSRRRRRGGRRRR.

Testis.

The protein localises to the nucleus. Its subcellular location is the chromosome. Protamines substitute for histones in the chromatin of sperm during the haploid phase of spermatogenesis. They compact sperm DNA into a highly condensed, stable and inactive complex. The chain is Protamine-1B from Oncorhynchus mykiss (Rainbow trout).